Here is a 135-residue protein sequence, read N- to C-terminus: Protein PsiE homolog (135 aa).

4 helical membrane-spanning segments follow: residues 13–33, 54–74, 82–102, and 107–127; these read VLQWILNIGLMALAAILVIFL, YMLVEGIVIYFLYFEFIALIV, HFPLRYFIYIGITAIIRLIIV, and PNDTLIYSFAILVLVIALYLA.

This sequence belongs to the PsiE family.

Its subcellular location is the cell inner membrane. The polypeptide is Protein PsiE homolog (Edwardsiella ictaluri (strain 93-146)).